A 1534-amino-acid polypeptide reads, in one-letter code: Dicer-like protein 1 (1534 aa).

Residues 36–70 (PSAEPGVEHDQISPGESDEEIEENISDQNNSSSQK) form a disordered region. A compositionally biased stretch (acidic residues) spans 51-60 (ESDEEIEENI). The Helicase ATP-binding domain maps to 130-311 (LFERAKAQNT…AAATRLETLL (182 aa)). 143-150 (LDTGSGKT) contributes to the ATP binding site. A DEAH box motif is present at residues 256–259 (DEAH). Positions 456 to 613 (ELSKHFSHAP…FCETLPEDRI (158 aa)) constitute a Helicase C-terminal domain. The Dicer dsRNA-binding fold domain occupies 648–738 (AIAILARYAS…KSIYHKRLPA (91 aa)). Residues 888-1016 (KTVTFVQEND…ICAEPLKISA (129 aa)) enclose the PAZ domain. RNase III domains are found at residues 1054–1199 (SDYA…LSGG) and 1250–1402 (ALQV…VDSD). The Mg(2+) site is built by E1291, D1388, and E1391. Positions 1436-1504 (TFLHNRLANE…SERALVVLDG (69 aa)) constitute a DRBM domain. Positions 1448, 1475, 1516, and 1518 each coordinate Zn(2+).

Belongs to the helicase family. Dicer subfamily. Mg(2+) serves as cofactor. The cofactor is Mn(2+).

Dicer-like endonuclease involved in cleaving double-stranded RNA in the RNA interference (RNAi) pathway. Produces 21 to 25 bp dsRNAs (siRNAs) which target the selective destruction of homologous RNAs leading to sequence-specific suppression of gene expression, called post-transcriptional gene silencing (PTGS). Part of a broad host defense response against viral infection and transposons. The sequence is that of Dicer-like protein 1 (dcl1) from Aspergillus clavatus (strain ATCC 1007 / CBS 513.65 / DSM 816 / NCTC 3887 / NRRL 1 / QM 1276 / 107).